A 171-amino-acid chain; its full sequence is UPF0763 protein HPSH_03535 (171 aa).

It belongs to the UPF0763 family.

The chain is UPF0763 protein HPSH_03535 from Helicobacter pylori (strain Shi470).